The following is a 295-amino-acid chain: Lectin 11 (295 aa).

Residues 1–22 (MHYSHFYFIINNTNMTINAIPK) are Cytoplasmic-facing. The helical transmembrane segment at 23 to 45 (LFATKNSISLSIVIFMYLLILVA) threads the bilayer. The Extracellular portion of the chain corresponds to 46 to 295 (NVKSDSSFNF…ILSWSFTSNM (250 aa)). A glycan (N-linked (GlcNAc...) asparagine) is linked at N152.

It belongs to the leguminous lectin family.

It is found in the membrane. Functionally, may be involved in arbuscular mycorrhizal (AM) symbiosis with AM fungi. This is Lectin 11 from Medicago truncatula (Barrel medic).